A 150-amino-acid polypeptide reads, in one-letter code: Large ribosomal subunit protein bL9 (150 aa).

The protein belongs to the bacterial ribosomal protein bL9 family.

Its function is as follows. Binds to the 23S rRNA. The chain is Large ribosomal subunit protein bL9 from Yersinia enterocolitica serotype O:8 / biotype 1B (strain NCTC 13174 / 8081).